The chain runs to 203 residues: Urease accessory protein UreG (203 aa).

A GTP-binding site is contributed by 14–21; that stretch reads GPVGSGKT.

This sequence belongs to the SIMIBI class G3E GTPase family. UreG subfamily. In terms of assembly, homodimer. UreD, UreF and UreG form a complex that acts as a GTP-hydrolysis-dependent molecular chaperone, activating the urease apoprotein by helping to assemble the nickel containing metallocenter of UreC. The UreE protein probably delivers the nickel.

The protein localises to the cytoplasm. In terms of biological role, facilitates the functional incorporation of the urease nickel metallocenter. This process requires GTP hydrolysis, probably effectuated by UreG. The chain is Urease accessory protein UreG from Sinorhizobium fredii (strain NBRC 101917 / NGR234).